We begin with the raw amino-acid sequence, 182 residues long: Crossover junction endodeoxyribonuclease RuvC (182 aa).

Catalysis depends on residues aspartate 7, glutamate 67, and aspartate 139. Aspartate 7, glutamate 67, and aspartate 139 together coordinate Mg(2+).

It belongs to the RuvC family. In terms of assembly, homodimer which binds Holliday junction (HJ) DNA. The HJ becomes 2-fold symmetrical on binding to RuvC with unstacked arms; it has a different conformation from HJ DNA in complex with RuvA. In the full resolvosome a probable DNA-RuvA(4)-RuvB(12)-RuvC(2) complex forms which resolves the HJ. Mg(2+) serves as cofactor.

It is found in the cytoplasm. It carries out the reaction Endonucleolytic cleavage at a junction such as a reciprocal single-stranded crossover between two homologous DNA duplexes (Holliday junction).. The RuvA-RuvB-RuvC complex processes Holliday junction (HJ) DNA during genetic recombination and DNA repair. Endonuclease that resolves HJ intermediates. Cleaves cruciform DNA by making single-stranded nicks across the HJ at symmetrical positions within the homologous arms, yielding a 5'-phosphate and a 3'-hydroxyl group; requires a central core of homology in the junction. The consensus cleavage sequence is 5'-(A/T)TT(C/G)-3'. Cleavage occurs on the 3'-side of the TT dinucleotide at the point of strand exchange. HJ branch migration catalyzed by RuvA-RuvB allows RuvC to scan DNA until it finds its consensus sequence, where it cleaves and resolves the cruciform DNA. The sequence is that of Crossover junction endodeoxyribonuclease RuvC from Bordetella parapertussis (strain 12822 / ATCC BAA-587 / NCTC 13253).